Consider the following 649-residue polypeptide: DNA mismatch repair protein MutL (649 aa).

The tract at residues Lys-339–Thr-414 is disordered. Residues Thr-342–Glu-360 are compositionally biased toward basic and acidic residues. Low complexity predominate over residues Pro-388–Gln-402.

It belongs to the DNA mismatch repair MutL/HexB family.

Its function is as follows. This protein is involved in the repair of mismatches in DNA. It is required for dam-dependent methyl-directed DNA mismatch repair. May act as a 'molecular matchmaker', a protein that promotes the formation of a stable complex between two or more DNA-binding proteins in an ATP-dependent manner without itself being part of a final effector complex. The sequence is that of DNA mismatch repair protein MutL from Bacillus cytotoxicus (strain DSM 22905 / CIP 110041 / 391-98 / NVH 391-98).